A 2623-amino-acid chain; its full sequence is Probable polyketide synthase 31 (2623 aa).

Over residues 1-11 (MTQNIDNNNNK) the composition is skewed to low complexity. A disordered region spans residues 1–25 (MTQNIDNNNNKLIRDRNDDDDVDRN). Residues 27–461 (DGDVAVIGIG…GSNVCLILSE (435 aa)) enclose the Ketosynthase family 3 (KS3) domain. Residues Cys-199, His-338, and His-384 each act as for beta-ketoacyl synthase activity in the active site. The segment at 666–699 (GVSADIIIGHSLGEVSSPYCSGMIDFQTLCYLIY) is acyl/malonyl transferase. The active-site For acyl/malonyl transferase activity is the Ser-676. The segment at 959–1088 (HEKIKSEGPS…GNFNLTKHNS (130 aa)) is N-terminal hotdog fold. The 309-residue stretch at 959–1267 (HEKIKSEGPS…CALVSLGSNP (309 aa)) folds into the PKS/mFAS DH domain. His-1000 functions as the Proton acceptor; for dehydratase activity in the catalytic mechanism. The segment at 1105–1267 (NFTSISKQDF…CALVSLGSNP (163 aa)) is C-terminal hotdog fold. Asp-1177 (proton donor; for dehydratase activity) is an active-site residue. A Carrier domain is found at 2524–2601 (ANNEIIHSTI…QSIEIIKSAK (78 aa)). Ser-2561 is modified (O-(pantetheine 4'-phosphoryl)serine). Positions 2600-2623 (AKNNNKNNNNNNNKNNSNNKNKNN) are disordered. Residues 2601–2623 (KNNNKNNNNNNNKNNSNNKNKNN) show a composition bias toward low complexity.

Requires pantetheine 4'-phosphate as cofactor.

Functionally, probable polyketide synthase. The sequence is that of Probable polyketide synthase 31 (pks31) from Dictyostelium discoideum (Social amoeba).